Here is a 309-residue protein sequence, read N- to C-terminus: Serine/threonine-protein phosphatase 2A catalytic subunit alpha isoform (309 aa).

Positions 57, 59, 85, and 117 each coordinate Mn(2+). Zn(2+) is bound by residues aspartate 57, histidine 59, and aspartate 85. Positions 85 and 117 each coordinate Fe(3+). The active-site Proton donor is histidine 118. 2 residues coordinate Mn(2+): histidine 167 and histidine 241. The Fe(3+) site is built by histidine 167 and histidine 241. Tyrosine 307 is subject to Phosphotyrosine. A Leucine methyl ester modification is found at leucine 309.

It belongs to the PPP phosphatase family. PP-1 subfamily. PP2A consists of a common heterodimeric core enzyme composed of PPP2CA, a 36 kDa catalytic subunit (subunit C), and PPP2R1A, a 65 kDa constant regulatory subunit (PR65 or subunit A), that associates with a variety of regulatory subunits. Proteins that associate with the core dimer include three families of regulatory subunits B (the R2/B/PR55/B55, R3/B''/PR72/PR130/PR59 and R5/B'/B56 families), the 48 kDa variable regulatory subunit, viral proteins, and cell signaling molecules. Interacts with the PP2A A subunit PPP2R1A. Interacts with the regulatory subunit PPP2R2A. Interacts (via C-terminus) with PTPA. Interacts with NXN; the interaction is direct. Interacts with KCTD20. Interacts with BTBD10. Interacts with SGO1 and SGO2. Interacts with RAF1. Interaction with IGBP1 protects unassembled PPP2CA from degradative ubiquitination. Interacts with GSK3B (via C2 domain). Interacts with MFHAS1; retains PPP2CA into the cytoplasm and excludes it from the nucleus. Interacts with PABIR1/FAM122A. Interacts with ADCY8; interaction is phosphatase activity-dependent; antagonizes interaction between ADCY8 and calmodulin. Interacts with CRTC3 (when phosphorylated at 'Ser-391'). Interacts with SPRY2; the interaction is inhibited by TESK1 interaction with SPRY2, possibly by vesicular sequestration of SPRY2. Interacts with TRAF3IP3. Interacts with AMBRA1 (via PxP motifs); enhancing interaction between PPP2CA and MYC or FOXO3. Forms a complex with AMBRA1 and BECN1; AMBRA1 and BECN1 components of the complex regulate MYC stability via different pathways. Part of the core of STRIPAK complexes composed of PP2A catalytic and scaffolding subunits, the striatins (PP2A regulatory subunits), the striatin-associated proteins MOB4, STRIP1 and STRIP2, PDCD10 and members of the STE20 kinases, such as STK24 and STK26. Phosphatase component of the Integrator-PP2A (INTAC) complex, composed of the Integrator core complex and protein phosphatase 2A subunits PPP2CA and PPP2R1A. The cofactor is Mn(2+). It depends on Fe(3+) as a cofactor. Requires Zn(2+) as cofactor. Post-translationally, reversibly methyl esterified on Leu-309 by leucine carboxyl methyltransferase 1 (Lcmt1) and protein phosphatase methylesterase 1 (Ppme1). Carboxyl methylation influences the affinity of the catalytic subunit for the different regulatory subunits, thereby modulating the PP2A holoenzyme's substrate specificity, enzyme activity and cellular localization. In terms of processing, phosphorylation of either threonine (by autophosphorylation-activated protein kinase) or tyrosine results in inactivation of the phosphatase. Auto-dephosphorylation has been suggested as a mechanism for reactivation. Polyubiquitinated, leading to its degradation by the proteasome.

The protein resides in the cytoplasm. It is found in the nucleus. Its subcellular location is the chromosome. The protein localises to the centromere. It localises to the cytoskeleton. The protein resides in the spindle pole. The catalysed reaction is O-phospho-L-seryl-[protein] + H2O = L-seryl-[protein] + phosphate. It carries out the reaction O-phospho-L-threonyl-[protein] + H2O = L-threonyl-[protein] + phosphate. With respect to regulation, inhibited by the interaction between PPP2R2A and ARPP19; this inhibition is enhanced when ARPP19 is phosphorylated. Inhibited by the interaction between PPP2R2A and PABIR1/FAM122A. Functionally, catalytic subunit of protein phosphatase 2A (PP2A), a serine/threonine phosphatase involved in the regulation of a wide variety of enzymes, signal transduction pathways, and cellular events. PP2A is the major phosphatase for microtubule-associated proteins (MAPs). PP2A can modulate the activity of phosphorylase B kinase casein kinase 2, mitogen-stimulated S6 kinase, and MAP-2 kinase. Cooperates with SGO2 to protect centromeric cohesin from separase-mediated cleavage in oocytes specifically during meiosis I. Can dephosphorylate various proteins, such as AXIN1, p53/TP53, PIM3, WEE1. Activates RAF1 by dephosphorylating it at 'Ser-259'. Mediates dephosphorylation of WEE1, preventing its ubiquitin-mediated proteolysis, increasing WEE1 protein levels, and promoting the G2/M checkpoint. Mediates dephosphorylation of MYC; promoting its ubiquitin-mediated proteolysis: interaction with AMBRA1 enhances interaction between PPP2CA and MYC. Mediates dephosphorylation of FOXO3; promoting its stabilization: interaction with AMBRA1 enhances interaction between PPP2CA and FOXO3. Catalyzes dephosphorylation of the pyrin domain of NLRP3, promoting assembly of the NLRP3 inflammasome. Together with RACK1 adapter, mediates dephosphorylation of AKT1 at 'Ser-473', preventing AKT1 activation and AKT-mTOR signaling pathway. Dephosphorylation of AKT1 is essential for regulatory T-cells (Treg) homeostasis and stability. Catalyzes dephosphorylation of PIM3, promotinh PIM3 ubiquitination and proteasomal degradation. Part of the striatin-interacting phosphatase and kinase (STRIPAK) complexes. STRIPAK complexes have critical roles in protein (de)phosphorylation and are regulators of multiple signaling pathways including Hippo, MAPK, nuclear receptor and cytoskeleton remodeling. Different types of STRIPAK complexes are involved in a variety of biological processes such as cell growth, differentiation, apoptosis, metabolism and immune regulation. Key mediator of a quality checkpoint during transcription elongation as part of the Integrator-PP2A (INTAC) complex. The INTAC complex drives premature transcription termination of transcripts that are unfavorably configured for transcriptional elongation: within the INTAC complex, PPP2CA catalyzes dephosphorylation of the C-terminal domain (CTD) of Pol II subunit POLR2A/RPB1 and SUPT5H/SPT5, thereby preventing transcriptional elongation. The polypeptide is Serine/threonine-protein phosphatase 2A catalytic subunit alpha isoform (Ppp2ca) (Rattus norvegicus (Rat)).